We begin with the raw amino-acid sequence, 351 residues long: Cysteine-rich receptor-like protein kinase 45 (351 aa).

The region spanning 37–287 is the Protein kinase domain; that stretch reads NDFSELVGRG…EILRYIHIAL (251 aa). Residues 43–51 and Lys65 contribute to the ATP site; that span reads VGRGGFGFV. Tyr110 carries the post-translational modification Phosphotyrosine. The Proton acceptor role is filled by Asp162. Thr197 and Thr202 each carry phosphothreonine. Tyr210 is subject to Phosphotyrosine.

It belongs to the protein kinase superfamily. Ser/Thr protein kinase family. CRK subfamily. In terms of assembly, interacts with CRK36. Autophosphorylated and phosphorylated by CRK36.

It localises to the cytoplasm. It is found in the cytosol. The catalysed reaction is L-seryl-[protein] + ATP = O-phospho-L-seryl-[protein] + ADP + H(+). The enzyme catalyses L-threonyl-[protein] + ATP = O-phospho-L-threonyl-[protein] + ADP + H(+). Functionally, forms a complex with CRK36 that may negatively control abscisic acid (ABA) and osmotic stress signal transduction. Involved in plant response to ABA during seed germination, early seedling growth and responses to abiotic stresses by inducing the expression of ABA-responsive genes and stress-inducible genes. Acts as a positive regulator in disease resistance, downstream of NPR1 and WRKY70. This Arabidopsis thaliana (Mouse-ear cress) protein is Cysteine-rich receptor-like protein kinase 45.